A 160-amino-acid polypeptide reads, in one-letter code: MLKIERLLINFKTLEEFKRFKEYGMQELSMLEDLQDNIIENDSTSPFYGIYFGDKLVARMSLYQVNGGTNPYFDQRQDFLELWKLEVLPGYQNNGYGKALVDFAKSFRMPIRTNSRMKSADFWDKMNFEPVKYDMARDKGENPYIWHPDMDGEMTSGETA.

One can recognise an N-acetyltransferase domain in the interval 7–151; sequence LLINFKTLEE…NPYIWHPDMD (145 aa).

This is an uncharacterized protein from Bacillus velezensis (strain DSM 23117 / BGSC 10A6 / LMG 26770 / FZB42) (Bacillus amyloliquefaciens subsp. plantarum).